The sequence spans 511 residues: MKCLLYLAFLFIGVNCKFTIVFPHNQKGNWKNVPSNYHYCPSSSDLNWHNDLVGTALQVKMPKSHKAIQADGWMCHASKWVTTCDFRWYGPKYITHSIRSFTPSVEQCKESIEQTKQGTWLNPGFPPQSCGYATVTDAEAAIVQVTPHHVLVDEYTGEWVDSQFINGKCSNDICPTVHNSTTWHSDYKVKGLCDSNLISMDITFFSEDGELSSLGKKGTGFRSNYFAYETGDKACKMQYCKHWGVRLPSGVWFEMADKDLFAAARFPECPEGSSISAPSQTSVDVSLIQDVERILDYSLCQETWSKIRAGLPISPVDLSYLAPKNPGTGPVFTIINGTLKYFETRYIRVDIAAPILSRMVGMISGTTTERVLWDDWAPYEDVGIGPNGVLRTSSGYKFPLYMIGHGMLDSDLHLSSKAQVFEHPHIQDAASQLPDGETLFFGDTGLSKNPIEFVEGWFSSWKSSIASFFFTIGLIIGLFLVLRVGIYLCIKLKHTKKRQIYTDIEMNRLGT.

A signal peptide spans 1–16; the sequence is MKCLLYLAFLFIGVNC. The Virion surface portion of the chain corresponds to 17–467; that stretch reads KFTIVFPHNQ…FSSWKSSIAS (451 aa). Positions 18–35 are trimerization; the sequence is FTIVFPHNQKGNWKNVPS. Cystine bridges form between Cys40–Cys300, Cys75–Cys108, Cys84–Cys130, Cys169–Cys174, Cys193–Cys240, and Cys235–Cys269. The interval 53 to 172 is fusion peptide; sequence VGTALQVKMP…QFINGKCSND (120 aa). An N6-methyllysine; by host modification is found at Lys66. Asn179 carries N-linked (GlcNAc...) asparagine; by host glycosylation. The trimerization stretch occupies residues 259–309; it reads DLFAAARFPECPEGSSISAPSQTSVDVSLIQDVERILDYSLCQETWSKIRA. Residue Asn336 is glycosylated (N-linked (GlcNAc...) asparagine; by host). Residues 383-405 form a trimerization region; the sequence is GIGPNGVLRTSSGYKFPLYMIGH. A helical transmembrane segment spans residues 468–488; sequence FFFTIGLIIGLFLVLRVGIYL. Residue Cys489 is the site of S-palmitoyl cysteine; by host attachment. Residues 489–511 lie on the Intravirion side of the membrane; that stretch reads CIKLKHTKKRQIYTDIEMNRLGT.

Belongs to the vesiculovirus glycoprotein family. As to quaternary structure, homotrimer. Interacts with host LDL at target cell surface (via CR2 and CR3 domains). Glycosylated by host. Palmitoylated by host.

The protein localises to the virion membrane. Its subcellular location is the host membrane. Its function is as follows. Attaches the virus to host LDL receptors, inducing clathrin-dependent endocytosis of the virion. In the endosome, the acidic pH induces conformational changes in the glycoprotein trimer, which trigger fusion between virus and endosomal membrane. The chain is Glycoprotein G (G) from Vesicular stomatitis Indiana virus (strain Mudd-Summers) (VSIV).